The sequence spans 493 residues: uncharacterized protein (493 aa).

The disordered stretch occupies residues 96–124 (TTVAKASPPPAKPASAPTEITWKGSPQFT).

This is an uncharacterized protein from Caulobacter vibrioides (strain ATCC 19089 / CIP 103742 / CB 15) (Caulobacter crescentus).